The sequence spans 356 residues: DNA polymerase IV (356 aa).

The 182-residue stretch at 6–187 folds into the UmuC domain; it reads IIHIDMDAFY…QPIRRLHGVG (182 aa). Asp10 and Asp105 together coordinate Mg(2+). Glu106 is a catalytic residue.

It belongs to the DNA polymerase type-Y family. Monomer. Requires Mg(2+) as cofactor.

The protein resides in the cytoplasm. It catalyses the reaction DNA(n) + a 2'-deoxyribonucleoside 5'-triphosphate = DNA(n+1) + diphosphate. In terms of biological role, poorly processive, error-prone DNA polymerase involved in untargeted mutagenesis. Copies undamaged DNA at stalled replication forks, which arise in vivo from mismatched or misaligned primer ends. These misaligned primers can be extended by PolIV. Exhibits no 3'-5' exonuclease (proofreading) activity. May be involved in translesional synthesis, in conjunction with the beta clamp from PolIII. This chain is DNA polymerase IV, found in Halorhodospira halophila (strain DSM 244 / SL1) (Ectothiorhodospira halophila (strain DSM 244 / SL1)).